Consider the following 76-residue polypeptide: cAMP-dependent protein kinase inhibitor alpha (76 aa).

Thr-2 carries the post-translational modification N-acetylthreonine. The tract at residues 49–76 is disordered; it reads KTEGEEDAQRSSTEQSGEAQGEAAKSES.

Belongs to the PKI family.

In terms of biological role, extremely potent competitive inhibitor of cAMP-dependent protein kinase activity, this protein interacts with the catalytic subunit of the enzyme after the cAMP-induced dissociation of its regulatory chains. The protein is cAMP-dependent protein kinase inhibitor alpha (PKIA) of Homo sapiens (Human).